The following is a 145-amino-acid chain: MDVLVINGPNLNLLGTRQPRFYGHKTLADINNDLLKIAKENNINIDFYQSNHEGQIIDKIQQTAAKIIIINPAAFTHTSVAIRDAFLAINKPFIEIHLSNIYNREEFRTKSFLSDIAYGCIFGFGPNGYTLALIEAINYINMKGE.

Y22 serves as the catalytic Proton acceptor. 3 residues coordinate substrate: N71, H77, and D84. Catalysis depends on H97, which acts as the Proton donor. Residues 98-99 and R108 each bind substrate; that span reads LS.

Belongs to the type-II 3-dehydroquinase family. Homododecamer.

The catalysed reaction is 3-dehydroquinate = 3-dehydroshikimate + H2O. Its pathway is metabolic intermediate biosynthesis; chorismate biosynthesis; chorismate from D-erythrose 4-phosphate and phosphoenolpyruvate: step 3/7. Functionally, catalyzes a trans-dehydration via an enolate intermediate. This chain is 3-dehydroquinate dehydratase, found in Francisella tularensis subsp. mediasiatica (strain FSC147).